The primary structure comprises 227 residues: NADH-quinone oxidoreductase subunit C (227 aa).

Belongs to the complex I 30 kDa subunit family. NDH-1 is composed of 14 different subunits. Subunits NuoB, C, D, E, F, and G constitute the peripheral sector of the complex.

It is found in the cell inner membrane. It catalyses the reaction a quinone + NADH + 5 H(+)(in) = a quinol + NAD(+) + 4 H(+)(out). Functionally, NDH-1 shuttles electrons from NADH, via FMN and iron-sulfur (Fe-S) centers, to quinones in the respiratory chain. The immediate electron acceptor for the enzyme in this species is believed to be ubiquinone. Couples the redox reaction to proton translocation (for every two electrons transferred, four hydrogen ions are translocated across the cytoplasmic membrane), and thus conserves the redox energy in a proton gradient. This Coxiella burnetii (strain RSA 331 / Henzerling II) protein is NADH-quinone oxidoreductase subunit C.